A 583-amino-acid polypeptide reads, in one-letter code: Putative glutaminase 3 (583 aa).

A disordered region spans residues 1-29 (MDNKEKEDEELSDELKDQPGPSEKPRTPT). Substrate is bound by residues Ser-216, Asn-265, Glu-311, Asn-318, Tyr-344, Tyr-396, and Val-414. 3 ANK repeats span residues 482–514 (DGQN…CKDY), 515–548 (DDRT…PCDR), and 549–581 (YDRT…LKGQ).

The protein belongs to the glutaminase family.

It carries out the reaction L-glutamine + H2O = L-glutamate + NH4(+). This chain is Putative glutaminase 3 (glna-3), found in Caenorhabditis elegans.